The following is a 110-amino-acid chain: Flagellar hook-basal body complex protein FliE (110 aa).

It belongs to the FliE family.

The protein resides in the bacterial flagellum basal body. This is Flagellar hook-basal body complex protein FliE from Pseudomonas putida (strain GB-1).